The sequence spans 148 residues: HTH-type transcriptional regulator BilQ (148 aa).

The HTH marR-type domain occupies methionine 1–aspartate 140. A DNA-binding region (H-T-H motif) is located at residues leucine 54–glutamine 77.

In terms of biological role, transcription regulator that regulates expression of the bilirubin reductase operon (bilQ, bilR and bilS). The protein is HTH-type transcriptional regulator BilQ of Clostridioides difficile (strain CD3).